Here is a 475-residue protein sequence, read N- to C-terminus: Ribulose bisphosphate carboxylase large chain (475 aa).

Positions 1-2 (MS) are excised as a propeptide. P3 is modified (N-acetylproline). The residue at position 14 (K14) is an N6,N6,N6-trimethyllysine. Positions 123 and 173 each coordinate substrate. K175 functions as the Proton acceptor in the catalytic mechanism. Position 177 (K177) interacts with substrate. Residues K201, D203, and E204 each coordinate Mg(2+). K201 carries the N6-carboxylysine modification. H294 (proton acceptor) is an active-site residue. Positions 295, 327, and 379 each coordinate substrate.

Belongs to the RuBisCO large chain family. Type I subfamily. Heterohexadecamer of 8 large chains and 8 small chains; disulfide-linked. The disulfide link is formed within the large subunit homodimers. Mg(2+) serves as cofactor. The disulfide bond which can form in the large chain dimeric partners within the hexadecamer appears to be associated with oxidative stress and protein turnover.

The protein localises to the plastid. It localises to the chloroplast. The catalysed reaction is 2 (2R)-3-phosphoglycerate + 2 H(+) = D-ribulose 1,5-bisphosphate + CO2 + H2O. The enzyme catalyses D-ribulose 1,5-bisphosphate + O2 = 2-phosphoglycolate + (2R)-3-phosphoglycerate + 2 H(+). Functionally, ruBisCO catalyzes two reactions: the carboxylation of D-ribulose 1,5-bisphosphate, the primary event in carbon dioxide fixation, as well as the oxidative fragmentation of the pentose substrate in the photorespiration process. Both reactions occur simultaneously and in competition at the same active site. This Spirogyra maxima (Green alga) protein is Ribulose bisphosphate carboxylase large chain.